Consider the following 386-residue polypeptide: Cytochrome b (386 aa).

Transmembrane regions (helical) follow at residues 32–52 (FGSL…TLAM), 76–98 (WLIR…LHVG), 113–133 (TWII…LGYV), and 179–199 (FFAL…MHLI). Heme b is bound by residues H82 and H96. Heme b contacts are provided by H183 and H197. H202 serves as a coordination point for a ubiquinone. Transmembrane regions (helical) follow at residues 226 to 246 (YIFK…LFVF), 290 to 310 (LLGV…PITD), 322 to 342 (LSKV…QLGA), and 349 to 369 (FIEF…VIMP).

Belongs to the cytochrome b family. As to quaternary structure, fungal cytochrome b-c1 complex contains 10 subunits; 3 respiratory subunits, 2 core proteins and 5 low-molecular weight proteins. Cytochrome b-c1 complex is a homodimer. Heme b is required as a cofactor.

It is found in the mitochondrion inner membrane. Component of the ubiquinol-cytochrome c reductase complex (complex III or cytochrome b-c1 complex) that is part of the mitochondrial respiratory chain. The b-c1 complex mediates electron transfer from ubiquinol to cytochrome c. Contributes to the generation of a proton gradient across the mitochondrial membrane that is then used for ATP synthesis. The sequence is that of Cytochrome b (cob) from Talaromyces marneffei (Penicillium marneffei).